We begin with the raw amino-acid sequence, 247 residues long: Oil body-associated protein 2B (247 aa).

Residues 1–28 (MASSDKVPVACPASSGDGKEPMGNPTKT) are disordered.

The protein belongs to the OBAP family.

This Arabidopsis thaliana (Mouse-ear cress) protein is Oil body-associated protein 2B.